The chain runs to 386 residues: Putative 8-amino-7-oxononanoate synthase (386 aa).

R22 contacts substrate. 109 to 110 (GY) contacts pyridoxal 5'-phosphate. H134 lines the substrate pocket. Residues S182, 207–210 (DEAH), and 238–241 (TLSK) each bind pyridoxal 5'-phosphate. Residue K241 is modified to N6-(pyridoxal phosphate)lysine. Position 356 (T356) interacts with substrate.

This sequence belongs to the class-II pyridoxal-phosphate-dependent aminotransferase family. BioF subfamily. As to quaternary structure, homodimer. The cofactor is pyridoxal 5'-phosphate.

The catalysed reaction is 6-carboxyhexanoyl-[ACP] + L-alanine + H(+) = (8S)-8-amino-7-oxononanoate + holo-[ACP] + CO2. The protein operates within cofactor biosynthesis; biotin biosynthesis. Functionally, catalyzes the decarboxylative condensation of pimeloyl-[acyl-carrier protein] and L-alanine to produce 8-amino-7-oxononanoate (AON), [acyl-carrier protein], and carbon dioxide. The chain is Putative 8-amino-7-oxononanoate synthase (bioF) from Nostoc sp. (strain PCC 7120 / SAG 25.82 / UTEX 2576).